A 94-amino-acid chain; its full sequence is Large ribosomal subunit protein uL23 (94 aa).

This sequence belongs to the universal ribosomal protein uL23 family. In terms of assembly, part of the 50S ribosomal subunit. Contacts protein L29, and trigger factor when it is bound to the ribosome.

In terms of biological role, one of the early assembly proteins it binds 23S rRNA. One of the proteins that surrounds the polypeptide exit tunnel on the outside of the ribosome. Forms the main docking site for trigger factor binding to the ribosome. This is Large ribosomal subunit protein uL23 from Exiguobacterium sibiricum (strain DSM 17290 / CCUG 55495 / CIP 109462 / JCM 13490 / 255-15).